A 455-amino-acid polypeptide reads, in one-letter code: DNA N(6)-methyladenine demethylase ALKBH1C (455 aa).

Disordered regions lie at residues 1-114 (MNHS…AGDN) and 173-194 (SSVE…SNES). In terms of domain architecture, Fe2OG dioxygenase spans 345-455 (LPDICIVNFY…GRLNLTFRQY (111 aa)). 352–354 (NFY) lines the 2-oxoglutarate pocket. Fe cation contacts are provided by histidine 363, aspartate 365, and histidine 423. 447–453 (RLNLTFR) contacts 2-oxoglutarate.

The protein belongs to the alkB family. The cofactor is Fe(2+). Expressed at low levels in roots and seedlings, but barely in cauline leaves, rosette leaves, stems, siliques and flowers.

Its subcellular location is the nucleus. The protein localises to the cytoplasm. The enzyme catalyses an N(6)-methyl-2'-deoxyadenosine in DNA + 2-oxoglutarate + O2 = a 2'-deoxyadenosine in DNA + formaldehyde + succinate + CO2. In terms of biological role, dioxygenase that catalyzes DNA N(6)-methyladenine (6 mA) demethylation with a low efficiency. The polypeptide is DNA N(6)-methyladenine demethylase ALKBH1C (Arabidopsis thaliana (Mouse-ear cress)).